The primary structure comprises 298 residues: MAFENIISAADKARILAEALPYIRRFSGSVVVIKYGGNAMTEPALKEGFARDVVLLKLVGIHPVIVHGGGPQINAMLEKVGKKGKFVQGMRVTDKEAMDIVEMVLGGHVNKEIVSMINTYGGHAVGVSGRDDHFIKAKKLLIDTPEQNGVDIGQVGTVESIDTGLVKGLIERGCIPVVAPVGVGEKGEAFNINADLVAGKLAEELNAEKLLMMTNIAGVMDKTGNLLTKLTPKRIDELIADGTLYGGMLPKIASAVEAAVNGVKATHIIDGRVPNALLLEIFTDAGIGSMILGGGEDA.

Substrate contacts are provided by residues 69 to 70 (GG), arginine 91, and asparagine 191.

The protein belongs to the acetylglutamate kinase family. ArgB subfamily.

It localises to the cytoplasm. The enzyme catalyses N-acetyl-L-glutamate + ATP = N-acetyl-L-glutamyl 5-phosphate + ADP. It functions in the pathway amino-acid biosynthesis; L-arginine biosynthesis; N(2)-acetyl-L-ornithine from L-glutamate: step 2/4. Its function is as follows. Catalyzes the ATP-dependent phosphorylation of N-acetyl-L-glutamate. The protein is Acetylglutamate kinase of Neisseria meningitidis serogroup C (strain 053442).